We begin with the raw amino-acid sequence, 292 residues long: Ferric aerobactin-binding protein VatD (292 aa).

Positions 1-12 (MLSAALAFNSYA) are cleaved as a signal peptide. The Fe/B12 periplasmic-binding domain occupies 30 to 292 (KVVALDWVLT…HITGRLTQPQ (263 aa)). Desferrioxamine B is bound by residues W61, R77, Y118, R185, W213, F215, W269, and F271.

Belongs to the bacterial solute-binding protein 8 family. The complex is composed of two ATP-binding proteins (VatC), two transmembrane proteins (VatB) and a solute-binding protein (VatD).

The protein localises to the periplasm. Part of the ABC transporter complex VatCDB involved in the import of iron(3+)-complexed aerobactin, a citrate-hydroxamate siderophore produced by other bacteria. Binds the iron(3+)-aerobactin complex and transfers it to the membrane-bound permease. Functions in the import of iron(3+)-complexed vulnibactin, a catecholate siderophore synthesized by V.vulnificus, in the absence of FatB. This is Ferric aerobactin-binding protein VatD from Vibrio vulnificus.